Reading from the N-terminus, the 123-residue chain is Putative iron-sulfur cluster insertion protein ErpA (123 aa).

3 residues coordinate iron-sulfur cluster: cysteine 51, cysteine 115, and cysteine 117.

This sequence belongs to the HesB/IscA family. Homodimer. Iron-sulfur cluster is required as a cofactor.

Functionally, required for insertion of 4Fe-4S clusters. The protein is Putative iron-sulfur cluster insertion protein ErpA of Bordetella bronchiseptica (strain ATCC BAA-588 / NCTC 13252 / RB50) (Alcaligenes bronchisepticus).